The chain runs to 298 residues: Enoyl-CoA hydratase ACTT6 (298 aa).

This sequence belongs to the enoyl-CoA hydratase/isomerase family.

It functions in the pathway mycotoxin biosynthesis. Enoyl-CoA hydratase; part of the gene clusters that mediate the biosynthesis of the host-selective toxins (HSTs) ACT-toxins responsible for brown spot of tangerine disease by the tangerine pathotype which affects tangerines and mandarins. ACT-toxins consist of three moieties, 9,10-epoxy-8-hydroxy-9-methyl-decatrienoic acid (EDA), valine and a polyketide. ACT-toxin I is toxic to both citrus and pear; toxin II the 5''-deoxy derivative of ACT-toxin I, is highly toxic to pear and slightly toxic to citrus. On cellular level, ACT-toxins affect plasma membrane of susceptible cells and cause a sudden increase in loss of K(+) after a few minutes of toxin treatment. The acyl-CoA ligase ACTT1, the hydrolase ACTT2, the enoyl-CoA hydratases ACTT3 and ACTT6, and the acyl-CoA synthetase ACTT5 are all involved in the biosynthesis of the AK-, AF- and ACT-toxin common 9,10-epoxy-8-hydroxy-9-methyl-decatrienoic acid (EDA) structural moiety. The exact role of each enzyme, and of additional enzymes identified within the AF-toxin clusters have still to be determined. On the other hand, ACTTS1 to ACTTS4 are specific to the tangerine pathotype. The function of ACTTS3 is to elongate the polyketide chain portion of ACT-toxin that is unique to this toxin. The enoyl-reductase ACTTS2 might complement the missing enoyl-reductase (ER) domain in ACTTS3 in the synthesis of the polyketide portion of ACT-toxin. The roles of the nonribosomal peptide synthetases-related proteins ACTTS1 and ACTTS4 have also still not been elucidated. This chain is Enoyl-CoA hydratase ACTT6, found in Alternaria alternata (Alternaria rot fungus).